The following is a 217-amino-acid chain: uncharacterized protein (217 aa).

Positions 1–32 are disordered; it reads MTLKKHRGKMSEKSNVNKKFTNSTQNNSNWSN. Positions 22 to 32 are enriched in low complexity; that stretch reads NSTQNNSNWSN.

This is an uncharacterized protein from Acidianus filamentous virus 2 (isolate Italy/Pozzuoli) (AFV-2).